The following is a 341-amino-acid chain: NADH-quinone oxidoreductase subunit H (341 aa).

The next 8 helical transmembrane spans lie at 38-58 (PSVVGPFGLLQPFADAIKLLV), 70-90 (ILFIMAPMLTFILALIVWAVI), 115-135 (IGVLYVLAISSLGIYGIIVAG), 161-181 (MGLIVATVVITTGTLNLGEMV), 187-207 (MPFWIDLLMMPIGVVFFISLL), 239-259 (LFFLGEYANMILGSAMMTIFF), 275-295 (IPGLIWFVLKIVLLLFIFVWT), and 314-334 (VFLPISVLWVILISGVLLFTG).

Belongs to the complex I subunit 1 family. In terms of assembly, NDH-1 is composed of 14 different subunits. Subunits NuoA, H, J, K, L, M, N constitute the membrane sector of the complex.

The protein resides in the cell membrane. It catalyses the reaction a quinone + NADH + 5 H(+)(in) = a quinol + NAD(+) + 4 H(+)(out). Functionally, NDH-1 shuttles electrons from NADH, via FMN and iron-sulfur (Fe-S) centers, to quinones in the respiratory chain. The immediate electron acceptor for the enzyme in this species is believed to be ubiquinone. Couples the redox reaction to proton translocation (for every two electrons transferred, four hydrogen ions are translocated across the cytoplasmic membrane), and thus conserves the redox energy in a proton gradient. This subunit may bind ubiquinone. This Wolbachia sp. subsp. Brugia malayi (strain TRS) protein is NADH-quinone oxidoreductase subunit H.